The following is a 123-amino-acid chain: Small ribosomal subunit protein bS16 (123 aa).

The interval 79 to 123 is disordered; that stretch reads AGIAKRPSRNNPTKGEPGKKAQERLALAKQAEEEAAAKAAEAASE.

It belongs to the bacterial ribosomal protein bS16 family.

The protein is Small ribosomal subunit protein bS16 of Brucella melitensis biotype 2 (strain ATCC 23457).